Here is a 473-residue protein sequence, read N- to C-terminus: Glutamate--tRNA ligase 1 (473 aa).

The 'HIGH' region motif lies at 11–21 (PSPTGFLHIGG). The disordered stretch occupies residues 111-132 (REQARKEGRPPRYDGRWRDRAE). Positions 240 to 244 (KLSKR) match the 'KMSKS' region motif. Lys-243 is an ATP binding site.

This sequence belongs to the class-I aminoacyl-tRNA synthetase family. Glutamate--tRNA ligase type 1 subfamily. In terms of assembly, monomer.

Its subcellular location is the cytoplasm. The enzyme catalyses tRNA(Glu) + L-glutamate + ATP = L-glutamyl-tRNA(Glu) + AMP + diphosphate. In terms of biological role, catalyzes the attachment of glutamate to tRNA(Glu) in a two-step reaction: glutamate is first activated by ATP to form Glu-AMP and then transferred to the acceptor end of tRNA(Glu). The protein is Glutamate--tRNA ligase 1 of Beijerinckia indica subsp. indica (strain ATCC 9039 / DSM 1715 / NCIMB 8712).